Here is an 844-residue protein sequence, read N- to C-terminus: Proto-oncogene vav (844 aa).

Positions 1–119 (MELWRQCTHW…YTLSALSWTP (119 aa)) constitute a Calponin-homology (CH) domain. Residues 193 to 372 (KRCCCLREIQ…RDLAQCVNEV (180 aa)) form the DH domain. Residues 401–503 (RPKIDGELKI…WMEQFEMAIS (103 aa)) form the PH domain. The Phorbol-ester/DAG-type zinc finger occupies 514-563 (GHDFQMFSFEETTSCKACQMLLRGTFYQGYRCQRCRAPAHKECLGRVPPC). The tract at residues 567–589 (GQDYSGTMKKDKPHRRAQDKKRN) is disordered. The region spanning 591–659 (LGLPKMEVCQ…PCNRVKPYVH (69 aa)) is the SH3 1 domain. Residues 670-764 (WYAGPMERAG…SLDTTLQFPF (95 aa)) enclose the SH2 domain. In terms of domain architecture, SH3 2 spans 781–841 (KIFGTAKARY…PSNYVEEDYS (61 aa)). A phosphotyrosine mark is found at Tyr-825 and Tyr-843.

In terms of assembly, interacts with SHB. Interacts with APS, DOCK2, GRB2, GRB3, DOCK2, SLA, TEC and ZNF655/VIK. Interacts with SIAH2; without leading to its degradation. Associates with BLNK, PLCG1, GRB2 and NCK1 in a B-cell antigen receptor-dependent fashion. Interacts with CBLB; which inhibits tyrosine phosphorylation and down-regulates activity. May interact with CCPG1. Interacts with CLNK. Interacts with THEMIS2. Interacts with NEK3 and this interaction is prolactin-dependent. Interacts with ITK. Interacts with PTK2B/PYK2. Interacts with HCK. Interacts with PTK2B/PYK2. Interacts (via SH2 domain) with SYK. Interacts with ANKRD54. Interacts with CD6. Interacts with LCP2; this interaction plays a role in TCR-mediated cytokine production. Post-translationally, phosphorylated by FYN. Phosphorylated on tyrosine residues by HCK in response to IFNG and bacterial lipopolysaccharide (LPS).

Couples tyrosine kinase signals with the activation of the Rho/Rac GTPases, thus leading to cell differentiation and/or proliferation. The chain is Proto-oncogene vav (VAV1) from Bos taurus (Bovine).